A 452-amino-acid chain; its full sequence is UPF0210 protein Dred_1672 (452 aa).

Belongs to the UPF0210 family. In terms of assembly, homodimer.

In Desulforamulus reducens (strain ATCC BAA-1160 / DSM 100696 / MI-1) (Desulfotomaculum reducens), this protein is UPF0210 protein Dred_1672.